The sequence spans 563 residues: Probable lysosomal cobalamin transporter (563 aa).

The next 5 membrane-spanning stretches (helical) occupy residues 8–28 (LIWF…SVFI), 40–60 (FVTF…MLLP), 95–115 (VIYY…IPFA), 144–164 (YTLA…FAPM), and 188–208 (AFTF…VFYT). N-linked (GlcNAc...) asparagine glycosylation occurs at Asn228. Helical transmembrane passes span 314–334 (GGFS…MTVI), 374–394 (IIFA…VVAV), 416–436 (MLLA…SVVM), and 506–526 (FGAL…VILV). The tract at residues 537–563 (ERQLDEDAEEAEEESLLASTGRSGNPT) is disordered. Residues 539–551 (QLDEDAEEAEEES) are compositionally biased toward acidic residues.

It belongs to the LIMR family. LMBRD1 subfamily.

The protein resides in the lysosome membrane. Functionally, probable lysosomal cobalamin transporter. Required to export cobalamin from lysosomes allowing its conversion to cofactors. The chain is Probable lysosomal cobalamin transporter from Neosartorya fischeri (strain ATCC 1020 / DSM 3700 / CBS 544.65 / FGSC A1164 / JCM 1740 / NRRL 181 / WB 181) (Aspergillus fischerianus).